The primary structure comprises 715 residues: MNPIVKQFKYGQHTVTLETGAIARQATAAVMASMDDTTVFVTVVAKKEVKEGQDFFPLTVDYQERTYAAGRIPGGFFKREGRPSEGETLIARLIDRPVRPLFPEGFFNEIQVIATVVSVNPQISPDLVAMIGASAALSLSGVPFNGPIGAARVGFINDQFVLNPTTSEQKISRLDLVVAGTDKAVLMVESEADILSEEQMLSAVVFGHQQQQVVIENIKEFVKEAGKPRWDWVAPEPNTALINQVKALAEARIGDAYRITEKQARYEQIDAIKADVIAQLTAQDETVSEGAIIDIITALESSIVRGRIIAGEPRIDGRTVDTVRALDICTGVLPRTHGSAIFTRGETQALAVATLGTERDAQIIDELTGEKSDRFLFHYNFPPYSVGETGRIGSPKRREIGHGRLAKRGVLAVMPTAEEFPYVVRVVSEITESNGSSSMASVCGASLALMDAGVPIKAAVAGIAMGLVKEEEKFVVLSDILGDEDHLGDMDFKVAGTREGVTALQMDIKIEGITPEIMQIALNQAKGARMHILSVMEQAIPAPRADISDFAPRIHTMKIDPKKIKDVIGKGGAVIRALTEETGTSIDIDDDGTVKIAATDNNAAKAVMARIEDIVAEVEVNAIYKGKVTRVVDFGAFVSILGGKEGLVHISQITNERVERVADYLSVGQEVTVKVVEIDRQNRIRLTMKDLNNDTPVAENVTEEAEVSSEQQAEI.

Mg(2+) is bound by residues D485 and D491. The 60-residue stretch at P552 to I611 folds into the KH domain. An S1 motif domain is found at N621–K689. Positions T695 to I715 are disordered.

This sequence belongs to the polyribonucleotide nucleotidyltransferase family. In terms of assembly, component of the RNA degradosome, which is a multiprotein complex involved in RNA processing and mRNA degradation. Requires Mg(2+) as cofactor.

It is found in the cytoplasm. The enzyme catalyses RNA(n+1) + phosphate = RNA(n) + a ribonucleoside 5'-diphosphate. In terms of biological role, involved in mRNA degradation. Catalyzes the phosphorolysis of single-stranded polyribonucleotides processively in the 3'- to 5'-direction. The protein is Polyribonucleotide nucleotidyltransferase of Actinobacillus pleuropneumoniae serotype 7 (strain AP76).